The following is a 113-amino-acid chain: Large ribosomal subunit protein uL22 (113 aa).

This sequence belongs to the universal ribosomal protein uL22 family. In terms of assembly, part of the 50S ribosomal subunit.

Its function is as follows. This protein binds specifically to 23S rRNA; its binding is stimulated by other ribosomal proteins, e.g. L4, L17, and L20. It is important during the early stages of 50S assembly. It makes multiple contacts with different domains of the 23S rRNA in the assembled 50S subunit and ribosome. The globular domain of the protein is located near the polypeptide exit tunnel on the outside of the subunit, while an extended beta-hairpin is found that lines the wall of the exit tunnel in the center of the 70S ribosome. This Bacillus cereus (strain ATCC 10987 / NRS 248) protein is Large ribosomal subunit protein uL22.